The following is a 373-amino-acid chain: sn-glycerol-3-phosphate import ATP-binding protein UgpC 2 (373 aa).

Residues 4-234 form the ABC transporter domain; it reads IDIRQVRKSY…PASTFVASFI (231 aa). 36–43 contributes to the ATP binding site; sequence GPSGCGKS.

It belongs to the ABC transporter superfamily. sn-glycerol-3-phosphate importer (TC 3.A.1.1.3) family. In terms of assembly, the complex is composed of two ATP-binding proteins (UgpC), two transmembrane proteins (UgpA and UgpE) and a solute-binding protein (UgpB).

The protein localises to the cell inner membrane. The enzyme catalyses sn-glycerol 3-phosphate(out) + ATP + H2O = sn-glycerol 3-phosphate(in) + ADP + phosphate + H(+). In terms of biological role, part of the ABC transporter complex UgpBAEC involved in sn-glycerol-3-phosphate (G3P) import. Responsible for energy coupling to the transport system. This chain is sn-glycerol-3-phosphate import ATP-binding protein UgpC 2, found in Agrobacterium fabrum (strain C58 / ATCC 33970) (Agrobacterium tumefaciens (strain C58)).